Here is a 215-residue protein sequence, read N- to C-terminus: MSNNSRHYSAIDEAILQGQAMLETLFGKPVAQRENPAKGLSQPALTSAEKKQSIGFMRVNHSGEVCAQALYHGQMATAKNPAVRALFTTAAKEETDHLAWCQERLEELGGHTSYLNAFWYTNSFLIGLLAGLSGDPLSLGFVEETEKQVEIHLADHLRKIPSNDLKSRKIVEYMQQDEIQHGLNARSSGAKELPYLVKKLMAFHAKVMTTLAYWI.

Fe cation contacts are provided by Glu-64, Glu-94, His-97, Glu-146, Glu-178, and His-181.

The protein belongs to the COQ7 family. It depends on Fe cation as a cofactor.

The protein localises to the cell membrane. The catalysed reaction is a 5-methoxy-2-methyl-3-(all-trans-polyprenyl)benzene-1,4-diol + AH2 + O2 = a 3-demethylubiquinol + A + H2O. It participates in cofactor biosynthesis; ubiquinone biosynthesis. Functionally, catalyzes the hydroxylation of 2-nonaprenyl-3-methyl-6-methoxy-1,4-benzoquinol during ubiquinone biosynthesis. The polypeptide is 3-demethoxyubiquinol 3-hydroxylase (Coxiella burnetii (strain CbuG_Q212) (Coxiella burnetii (strain Q212))).